A 200-amino-acid polypeptide reads, in one-letter code: Probable nicotinate-nucleotide adenylyltransferase (200 aa).

This sequence belongs to the NadD family.

The enzyme catalyses nicotinate beta-D-ribonucleotide + ATP + H(+) = deamido-NAD(+) + diphosphate. It functions in the pathway cofactor biosynthesis; NAD(+) biosynthesis; deamido-NAD(+) from nicotinate D-ribonucleotide: step 1/1. Catalyzes the reversible adenylation of nicotinate mononucleotide (NaMN) to nicotinic acid adenine dinucleotide (NaAD). This is Probable nicotinate-nucleotide adenylyltransferase from Clavibacter sepedonicus (Clavibacter michiganensis subsp. sepedonicus).